The chain runs to 233 residues: MKVIKVENQVQGGKVAFEILKEKLANGAQTLGLATGSSPLEFYKEIVESDLDFSNLTSVNLDEYVGLDGDNPQSYRYFMQENLFNQKPFKESFLPRGVKDNAEAEVERYNQILADHPVDLQILGIGRNGHIGFNEPGTPFDSQTHLVELDQSTIEANARFFAKIEDVPTQAISMGIKNILDAKSIILFAYGESKAEAIAGTVSGPVTENLPASSLQNHPDVTIIADAEALSLL.

Asp62 (proton acceptor; for enolization step) is an active-site residue. Catalysis depends on Asn128, which acts as the For ring-opening step. The active-site Proton acceptor; for ring-opening step is the His130. Glu135 serves as the catalytic For ring-opening step.

It belongs to the glucosamine/galactosamine-6-phosphate isomerase family. NagB subfamily.

It carries out the reaction alpha-D-glucosamine 6-phosphate + H2O = beta-D-fructose 6-phosphate + NH4(+). It participates in amino-sugar metabolism; N-acetylneuraminate degradation; D-fructose 6-phosphate from N-acetylneuraminate: step 5/5. Catalyzes the reversible isomerization-deamination of glucosamine 6-phosphate (GlcN6P) to form fructose 6-phosphate (Fru6P) and ammonium ion. This chain is Glucosamine-6-phosphate deaminase, found in Streptococcus pneumoniae serotype 4 (strain ATCC BAA-334 / TIGR4).